The sequence spans 594 residues: Membrane protein insertase YidC (594 aa).

A helical membrane pass occupies residues 7–27 (YFVAIALSVLILIAWQFFYVS). Residues 36 to 73 (AAEQAQQAQQTQQQPGAQPAAPGQALPGGAIPSAGESR) form a disordered region. Low complexity predominate over residues 37–65 (AEQAQQAQQTQQQPGAQPAAPGQALPGGA). A run of 4 helical transmembrane segments spans residues 369–389 (LFGNFGIAILITTIVVKLIFF), 443–463 (WPILIQIPVFFALYKVIYVTI), 488–508 (LFGLLPFEGPAFLHLGIWPII), and 532–552 (FTWMPVVFTFMLASFPAGLVI).

The protein belongs to the OXA1/ALB3/YidC family. Type 1 subfamily. As to quaternary structure, interacts with the Sec translocase complex via SecD. Specifically interacts with transmembrane segments of nascent integral membrane proteins during membrane integration.

It is found in the cell inner membrane. Its function is as follows. Required for the insertion and/or proper folding and/or complex formation of integral membrane proteins into the membrane. Involved in integration of membrane proteins that insert both dependently and independently of the Sec translocase complex, as well as at least some lipoproteins. Aids folding of multispanning membrane proteins. The protein is Membrane protein insertase YidC of Rhizobium meliloti (strain 1021) (Ensifer meliloti).